Here is a 572-residue protein sequence, read N- to C-terminus: E3 SUMO-protein ligase PIAS2 (572 aa).

The SAP domain maps to Val11–Leu45. The LXXLL motif motif lies at Leu19 to Leu23. Glycyl lysine isopeptide (Lys-Gly) (interchain with G-Cter in SUMO2) cross-links involve residues Lys46 and Lys249. One can recognise a PINIT domain in the interval Gln134–Leu299. The SP-RING-type zinc finger occupies Pro331–Asp412. Zn(2+) is bound by residues Cys362, His364, Cys385, and Cys388. Glycyl lysine isopeptide (Lys-Gly) (interchain with G-Cter in SUMO2) cross-links involve residues Lys430, Lys435, Lys443, and Lys452. The interval Ile467–Thr473 is SUMO1-binding. A phosphoserine mark is found at Ser476, Ser477, and Ser478. The Nuclear localization signal motif lies at Pro484–Phe492. Lys489 is covalently cross-linked (Glycyl lysine isopeptide (Lys-Gly) (interchain with G-Cter in SUMO2)). Ser499 carries the post-translational modification Phosphoserine. A Glycyl lysine isopeptide (Lys-Gly) (interchain with G-Cter in SUMO2) cross-link involves residue Lys502. The disordered stretch occupies residues Ala523–Gln572. Polar residues predominate over residues Asn558–Gln572.

The protein belongs to the PIAS family. In terms of assembly, binds SUMO1 and UBE2I. Interacts with AXIN1, JUN, MDM2, PARK7, TP53 and TP73 isoform alpha, but not TP73 isoform beta. Interacts with STAT4 following IL12 and IFN-alpha stimulation of T-cells. Interacts also with GTF2I, GTF2IRD1, IKFZ1, DAB2 and MSX2, as well as with several steroid receptors, including ESR1, ESR2, NR3C1, PGR, AR, and with NCOA2. Sumoylation of a target protein seems to enhance the interaction. Binds to sumoylated ELK1. Binds DNA, such as CDKN1A promoter, in a sequence-specific manner. Interacts with PLAG1. Interacts with KLF8; the interaction results in SUMO ligation and repression of KLF8 transcriptional activity and of its cell cycle progression into G(1) phase. Interacts with IFIH1/MDA5. Interacts with PML. Interacts with PRDM1. Sumoylated. In terms of tissue distribution, mainly expressed in testis.

It localises to the nucleus speckle. Its subcellular location is the nucleus. It is found in the PML body. The protein operates within protein modification; protein sumoylation. In terms of biological role, functions as an E3-type small ubiquitin-like modifier (SUMO) ligase, stabilizing the interaction between UBE2I and the substrate, and as a SUMO-tethering factor. Plays a crucial role as a transcriptional coregulation in various cellular pathways, including the STAT pathway, the p53 pathway and the steroid hormone signaling pathway. The effects of this transcriptional coregulation, transactivation or silencing may vary depending upon the biological context and PIAS2 isoform studied. However, it seems to be mostly involved in gene silencing. Binds to sumoylated ELK1 and enhances its transcriptional activity by preventing recruitment of HDAC2 by ELK1, thus reversing SUMO-mediated repression of ELK1 transactivation activity. Sumoylates PML at'Lys-65' and 'Lys-160'. The protein is E3 SUMO-protein ligase PIAS2 (Pias2) of Rattus norvegicus (Rat).